A 142-amino-acid polypeptide reads, in one-letter code: Small ribosomal subunit protein bS6 (142 aa).

Basic and acidic residues predominate over residues 113-136 (IKKEPREPREPRAPREPKAEKIEE). The interval 113-142 (IKKEPREPREPRAPREPKAEKIEEQTFSEE) is disordered.

Belongs to the bacterial ribosomal protein bS6 family.

Functionally, binds together with bS18 to 16S ribosomal RNA. This chain is Small ribosomal subunit protein bS6, found in Campylobacter curvus (strain 525.92).